A 107-amino-acid chain; its full sequence is UPF0235 protein RPC_0058 (107 aa).

Belongs to the UPF0235 family.

In Rhodopseudomonas palustris (strain BisB18), this protein is UPF0235 protein RPC_0058.